The chain runs to 183 residues: Glutathione-regulated potassium-efflux system ancillary protein KefG (183 aa).

The protein belongs to the NAD(P)H dehydrogenase (quinone) family. KefG subfamily. In terms of assembly, interacts with KefB.

The protein localises to the cell inner membrane. The enzyme catalyses a quinone + NADH + H(+) = a quinol + NAD(+). It carries out the reaction a quinone + NADPH + H(+) = a quinol + NADP(+). Regulatory subunit of a potassium efflux system that confers protection against electrophiles. Required for full activity of KefB. The sequence is that of Glutathione-regulated potassium-efflux system ancillary protein KefG from Serratia proteamaculans (strain 568).